A 137-amino-acid polypeptide reads, in one-letter code: MGVLSEFKAFAVKGNVVDMAVGIIIGAAFGKIVSSFVGDVVMPPIGLLIGGVNFGDLAVTLKAAAGDTPAVVLAYGKFIQSIIDFVIIAFAIFMGVKVINRLKREEAVAPTLPPVPTKEEELLGEIRDLLKAQNNKP.

A run of 4 helical transmembrane segments spans residues 9 to 29 (AFAV…GAAF), 32 to 52 (IVSS…IGGV), 54 to 74 (FGDL…VVLA), and 79 to 99 (IQSI…VKVI).

The protein belongs to the MscL family. In terms of assembly, homopentamer.

The protein localises to the cell inner membrane. In terms of biological role, channel that opens in response to stretch forces in the membrane lipid bilayer. May participate in the regulation of osmotic pressure changes within the cell. The protein is Large-conductance mechanosensitive channel of Pseudomonas fluorescens (strain ATCC BAA-477 / NRRL B-23932 / Pf-5).